Consider the following 889-residue polypeptide: DNA-directed RNA polymerase subunit Rpo1N (889 aa).

Residues Cys62, Cys65, Cys72, His75, Cys102, Cys105, Cys149, and Cys152 each coordinate Zn(2+). Positions 466, 468, and 470 each coordinate Mg(2+).

This sequence belongs to the RNA polymerase beta' chain family. In terms of assembly, part of the RNA polymerase complex. Mg(2+) is required as a cofactor. It depends on Zn(2+) as a cofactor.

The protein resides in the cytoplasm. It catalyses the reaction RNA(n) + a ribonucleoside 5'-triphosphate = RNA(n+1) + diphosphate. Functionally, DNA-dependent RNA polymerase (RNAP) catalyzes the transcription of DNA into RNA using the four ribonucleoside triphosphates as substrates. Forms the clamp head domain. The protein is DNA-directed RNA polymerase subunit Rpo1N of Methanococcus vannielii (strain ATCC 35089 / DSM 1224 / JCM 13029 / OCM 148 / SB).